The chain runs to 20 residues: Dihydrolipoamide-residue succinyltransferase component of 2-oxoglutarate dehydrogenase complex (20 aa).

Belongs to the 2-oxoacid dehydrogenase family. Forms a 24-polypeptide structural core with octahedral symmetry. (R)-lipoate is required as a cofactor.

It localises to the mitochondrion membrane. It carries out the reaction N(6)-[(R)-dihydrolipoyl]-L-lysyl-[protein] + succinyl-CoA = N(6)-[(R)-S(8)-succinyldihydrolipoyl]-L-lysyl-[protein] + CoA. It functions in the pathway amino-acid degradation; L-lysine degradation via saccharopine pathway; glutaryl-CoA from L-lysine: step 6/6. In terms of biological role, the 2-oxoglutarate dehydrogenase complex catalyzes the overall conversion of 2-oxoglutarate to succinyl-CoA and CO(2). It contains multiple copies of three enzymatic components: 2-oxoglutarate dehydrogenase (E1), dihydrolipoamide succinyltransferase (E2) and lipoamide dehydrogenase (E3). The chain is Dihydrolipoamide-residue succinyltransferase component of 2-oxoglutarate dehydrogenase complex from Solanum tuberosum (Potato).